Reading from the N-terminus, the 155-residue chain is Ribosome maturation factor RimP (155 aa).

This sequence belongs to the RimP family.

It localises to the cytoplasm. Functionally, required for maturation of 30S ribosomal subunits. The chain is Ribosome maturation factor RimP from Synechococcus sp. (strain RCC307).